We begin with the raw amino-acid sequence, 192 residues long: Iron sulfur cluster assembly protein 1, mitochondrial (192 aa).

The transit peptide at 1-53 directs the protein to the mitochondrion; it reads MSVFRRSVQCVGVLPSILAQRSSLLARPANLQFLKTNSSKFVPQVTANVSRRM.

It belongs to the NifU family. Homodimer. Component of the core Fe-S cluster (ISC) assembly machinery. Requires [2Fe-2S] cluster as cofactor.

Its subcellular location is the mitochondrion. The protein localises to the mitochondrion matrix. It functions in the pathway cofactor biosynthesis; iron-sulfur cluster biosynthesis. Functionally, scaffold protein for the de novo synthesis of iron-sulfur (Fe-S) clusters within mitochondria, which is required for maturation of both mitochondrial and cytoplasmic [2Fe-2S] and [4Fe-4S] proteins. First, a [2Fe-2S] cluster is transiently assembled on the scaffold protein isu1. In a second step, the cluster is released from isu1, transferred to a glutaredoxin, followed by the formation of mitochondrial [2Fe-2S] proteins, the synthesis of [4Fe-4S] clusters and their target-specific insertion into the recipient apoproteins. Cluster assembly on isu1 depends on the function of the cysteine desulfurase complex nfs1-isd11, which serves as the sulfur donor for cluster synthesis, the iron-binding protein frataxin as the putative iron donor, and the electron transfer chain comprised of ferredoxin reductase and ferredoxin, which receive their electrons from NADH. The polypeptide is Iron sulfur cluster assembly protein 1, mitochondrial (isu1) (Schizosaccharomyces pombe (strain 972 / ATCC 24843) (Fission yeast)).